We begin with the raw amino-acid sequence, 243 residues long: 1-(5-phosphoribosyl)-5-[(5-phosphoribosylamino)methylideneamino] imidazole-4-carboxamide isomerase (243 aa).

D8 acts as the Proton acceptor in catalysis. The active-site Proton donor is D129.

This sequence belongs to the HisA/HisF family.

Its subcellular location is the cytoplasm. The catalysed reaction is 1-(5-phospho-beta-D-ribosyl)-5-[(5-phospho-beta-D-ribosylamino)methylideneamino]imidazole-4-carboxamide = 5-[(5-phospho-1-deoxy-D-ribulos-1-ylimino)methylamino]-1-(5-phospho-beta-D-ribosyl)imidazole-4-carboxamide. It functions in the pathway amino-acid biosynthesis; L-histidine biosynthesis; L-histidine from 5-phospho-alpha-D-ribose 1-diphosphate: step 4/9. This Carboxydothermus hydrogenoformans (strain ATCC BAA-161 / DSM 6008 / Z-2901) protein is 1-(5-phosphoribosyl)-5-[(5-phosphoribosylamino)methylideneamino] imidazole-4-carboxamide isomerase.